Reading from the N-terminus, the 309-residue chain is MDPSQNPRDLCQIYLEKFMVISNYRSLSFKKQKYLVIDKLSNYNNTDYRDVLQVNGYFTYCVQKNKLDAIQYLYENNLMNPENKSQLFKIAIVHGNIDVLKLVIDYGIDVSLDDHFAITVCTRPISNTENIIQLLIDNGADVTSNNNLPIKFAILKGTINKSVLDLLINNGADIHADEYFCAKYAAKCCYIFALKYIINLGIDVNMENGILLKNVLSDTAYSSNEYTYSCIKTLLENGADISFLDDNDTLKMCRGSKTRNILILLLDYGFDISFINEYQVKDSSKLSEINKILDQGIDPIKFILFTNEI.

7 ANK repeats span residues 53–82 (QVNG…MNPE), 83–112 (NKSQ…DVSL), 114–144 (DHFA…DVTS), 145–176 (NNNL…DIHA), 177–206 (DEYF…DVNM), 214–243 (NVLS…DISF), and 245–274 (DDND…DISF).

The polypeptide is Putative ankyrin repeat protein R603 (Acanthamoeba polyphaga (Amoeba)).